We begin with the raw amino-acid sequence, 945 residues long: Netrin receptor UNC5B (945 aa).

An N-terminal signal peptide occupies residues 1 to 26 (MGARSGARGALLLALLLCWDPRLSQA). Residues 27 to 377 (GTDSGSEVLP…LEASGDAALY (351 aa)) lie on the Extracellular side of the membrane. The region spanning 48–145 (PYFLQEPQDA…AGTTKSRRAY (98 aa)) is the Ig-like domain. Disulfide bonds link Cys69-Cys130, Cys81-Cys128, Cys174-Cys225, Cys258-Cys295, Cys262-Cys299, Cys273-Cys285, Cys314-Cys348, Cys318-Cys353, and Cys326-Cys338. In terms of domain architecture, Ig-like C2-type spans 147–242 (RIAYLRKNFD…KRRSTTATVI (96 aa)). A glycan (N-linked (GlcNAc...) asparagine) is linked at Asn222. 2 consecutive TSP type-1 domains span residues 246–300 (NGGW…TICP) and 302–354 (DGAW…GLCM). N-linked (GlcNAc...) asparagine glycosylation occurs at Asn347. The helical transmembrane segment at 378-398 (AGLVVAIFVVVAILMAVGVVV) threads the bilayer. Residues 399–945 (YRRNCRDFDT…LVAVATDGDC (547 aa)) are Cytoplasmic-facing. Cys403 carries S-palmitoyl cysteine lipidation. Residues 543–686 (SSVSGTFGCL…LGTYVFTGES (144 aa)) enclose the ZU5 domain. The residue at position 581 (Tyr581) is a Phosphotyrosine. The interval 689–838 (RSAVKRLQLA…AETPAGSLDT (150 aa)) is UPA domain. An interaction with DCC region spans residues 707-725 (SLEYSLRVYCLEDTPVALK). In terms of domain architecture, Death spans 865–943 (KICNSLDAPN…EMLVAVATDG (79 aa)).

Belongs to the unc-5 family. In terms of assembly, interacts with the cytoplasmic part of DCC. Interacts with GNAI2 via its cytoplasmic part. Interacts (via death domain) with DAPK1 (via death domain). Interacts (via extracellular domain) with FLRT3 (via extracellular domain); the interaction is direct. Interacts (via extracellular domain) with FLRT2 and FLRT3 (via extracellular domain), but has higher affinity for FLRT3. Identified in a complex with FLRT3 and ADGRL3; does not interact with ADGRL3 by itself. Phosphorylated on cytoplasmic tyrosine residues. Post-translationally, proteolytically cleaved by caspases during apoptosis. The cleavage does not take place when the receptor is associated with netrin ligand. Its cleavage by caspases is required to induce apoptosis. In terms of processing, palmitoylation is required for pro-apoptotic activity, but not for location at lipid rafts. Highly expressed in brain. Also expressed at lower level in developing lung, cartilage, kidney and hematopoietic and immune tissues.

The protein resides in the cell membrane. It localises to the membrane raft. In terms of biological role, receptor for netrin required for axon guidance. Mediates axon repulsion of neuronal growth cones in the developing nervous system upon ligand binding. Axon repulsion in growth cones may be caused by its association with DCC that may trigger signaling for repulsion. Functions as a netrin receptor that negatively regulates vascular branching during angiogenesis. Mediates retraction of tip cell filopodia on endothelial growth cones in response to netrin. It also acts as a dependence receptor required for apoptosis induction when not associated with netrin ligand. Mediates apoptosis by activating DAPK1. In the absence of NTN1, activates DAPK1 by reducing its autoinhibitory phosphorylation at Ser-308 thereby increasing its catalytic activity. The protein is Netrin receptor UNC5B (UNC5B) of Homo sapiens (Human).